The following is a 538-amino-acid chain: Chaperonin GroEL (538 aa).

ATP contacts are provided by residues 29 to 32, 86 to 90, glycine 413, 477 to 479, and aspartate 493; these read TLGP, DGTTT, and NAA.

Belongs to the chaperonin (HSP60) family. Forms a cylinder of 14 subunits composed of two heptameric rings stacked back-to-back. Interacts with the co-chaperonin GroES.

The protein resides in the cytoplasm. It carries out the reaction ATP + H2O + a folded polypeptide = ADP + phosphate + an unfolded polypeptide.. Functionally, together with its co-chaperonin GroES, plays an essential role in assisting protein folding. The GroEL-GroES system forms a nano-cage that allows encapsulation of the non-native substrate proteins and provides a physical environment optimized to promote and accelerate protein folding. This chain is Chaperonin GroEL, found in Scardovia inopinata (Bifidobacterium inopinatum).